The primary structure comprises 241 residues: 2,3,4,5-tetrahydropyridine-2,6-dicarboxylate N-acetyltransferase (241 aa).

It belongs to the transferase hexapeptide repeat family. DapH subfamily.

It carries out the reaction (S)-2,3,4,5-tetrahydrodipicolinate + acetyl-CoA + H2O = L-2-acetamido-6-oxoheptanedioate + CoA. Its pathway is amino-acid biosynthesis; L-lysine biosynthesis via DAP pathway; LL-2,6-diaminopimelate from (S)-tetrahydrodipicolinate (acetylase route): step 1/3. Catalyzes the transfer of an acetyl group from acetyl-CoA to tetrahydrodipicolinate. The sequence is that of 2,3,4,5-tetrahydropyridine-2,6-dicarboxylate N-acetyltransferase from Thermoanaerobacter sp. (strain X514).